Here is a 442-residue protein sequence, read N- to C-terminus: ATP-dependent protease ATPase subunit HslU (442 aa).

ATP-binding positions include Ile18 and 60–65; that span reads GVGKTE. The interval 136 to 156 is disordered; sequence LPKPKNDWDSTDSDANSNTRQ. ATP-binding residues include Asp255, Glu320, and Arg392.

It belongs to the ClpX chaperone family. HslU subfamily. As to quaternary structure, a double ring-shaped homohexamer of HslV is capped on each side by a ring-shaped HslU homohexamer. The assembly of the HslU/HslV complex is dependent on binding of ATP.

The protein localises to the cytoplasm. ATPase subunit of a proteasome-like degradation complex; this subunit has chaperone activity. The binding of ATP and its subsequent hydrolysis by HslU are essential for unfolding of protein substrates subsequently hydrolyzed by HslV. HslU recognizes the N-terminal part of its protein substrates and unfolds these before they are guided to HslV for hydrolysis. The polypeptide is ATP-dependent protease ATPase subunit HslU (Shewanella sp. (strain MR-7)).